We begin with the raw amino-acid sequence, 268 residues long: Ribosomal RNA small subunit methyltransferase A (268 aa).

S-adenosyl-L-methionine is bound by residues asparagine 18, leucine 20, glycine 45, glutamate 66, aspartate 91, and asparagine 112.

The protein belongs to the class I-like SAM-binding methyltransferase superfamily. rRNA adenine N(6)-methyltransferase family. RsmA subfamily.

It is found in the cytoplasm. The catalysed reaction is adenosine(1518)/adenosine(1519) in 16S rRNA + 4 S-adenosyl-L-methionine = N(6)-dimethyladenosine(1518)/N(6)-dimethyladenosine(1519) in 16S rRNA + 4 S-adenosyl-L-homocysteine + 4 H(+). Specifically dimethylates two adjacent adenosines (A1518 and A1519) in the loop of a conserved hairpin near the 3'-end of 16S rRNA in the 30S particle. May play a critical role in biogenesis of 30S subunits. This Shewanella putrefaciens (strain CN-32 / ATCC BAA-453) protein is Ribosomal RNA small subunit methyltransferase A.